We begin with the raw amino-acid sequence, 249 residues long: EID1-like F-box protein 2 (249 aa).

The F-box domain occupies 16–68 (HCTKGHLSEEVLFLMVQHLNWNPNVIATLSCVCKWFDDLAKRLLWKEFCRARA).

The sequence is that of EID1-like F-box protein 2 (EDL2) from Arabidopsis thaliana (Mouse-ear cress).